The primary structure comprises 432 residues: Neuronal pentraxin-2 (432 aa).

Positions 1 to 14 are cleaved as a signal peptide; sequence MLALLTAGVALAVA. N149 and N190 each carry an N-linked (GlcNAc...) asparagine glycan. Residues 224-425 form the Pentraxin (PTX) domain; it reads DAFKVSLPLR…GASKWPVETC (202 aa). A disulfide bond links C254 and C314. Positions 278, 356, 357, 358, and 368 each coordinate Ca(2+). N394 carries an N-linked (GlcNAc...) asparagine glycan.

Homooligomer or heterooligomer (probably pentamer) with neuronal pentraxin receptor (NPTXR). It depends on Ca(2+) as a cofactor.

The protein resides in the secreted. Likely to play role in the modification of cellular properties that underlie long-term plasticity. Binds to agar matrix in a calcium-dependent manner. This is Neuronal pentraxin-2 (Nptx2) from Rattus norvegicus (Rat).